The chain runs to 115 residues: UPF0738 protein SAV1005 (115 aa).

Belongs to the UPF0738 family.

This is UPF0738 protein SAV1005 from Staphylococcus aureus (strain Mu50 / ATCC 700699).